We begin with the raw amino-acid sequence, 122 residues long: Holo-[acyl-carrier-protein] synthase (122 aa).

2 residues coordinate Mg(2+): Asp8 and Glu60.

This sequence belongs to the P-Pant transferase superfamily. AcpS family. Mg(2+) serves as cofactor.

The protein resides in the cytoplasm. It catalyses the reaction apo-[ACP] + CoA = holo-[ACP] + adenosine 3',5'-bisphosphate + H(+). Its function is as follows. Transfers the 4'-phosphopantetheine moiety from coenzyme A to a Ser of acyl-carrier-protein. This is Holo-[acyl-carrier-protein] synthase from Anaplasma phagocytophilum (strain HZ).